The sequence spans 174 residues: Translation initiation factor IF-3 (174 aa).

Belongs to the IF-3 family. Monomer.

It is found in the cytoplasm. Functionally, IF-3 binds to the 30S ribosomal subunit and shifts the equilibrium between 70S ribosomes and their 50S and 30S subunits in favor of the free subunits, thus enhancing the availability of 30S subunits on which protein synthesis initiation begins. The protein is Translation initiation factor IF-3 of Xanthobacter autotrophicus (strain ATCC BAA-1158 / Py2).